A 258-amino-acid chain; its full sequence is MAVAVRVIPCLDVDAGRVVKGVNFEGLRDAGDPVELAHRYDNAGADELTFLDVTASSGNRETTFDVVRRTAEEVFIPLCVGGGVRGVAEVDKLLRFGADKAAINTAAVARPDVIDEITRHFGSQVLVLSVDARRTRPGSKPTPSGFEVTTHGGRTGTGIDAIEWAKEAADRGVGEILLNSIDADGTKDGFDLEMIRMVRAAVKVPLIASGGAGEPAHFPPAVAAGADAVLAASIFHWGPNDMMHQVKDAIRNAGFEVR.

Catalysis depends on residues D12 and D131.

The protein belongs to the HisA/HisF family. As to quaternary structure, heterodimer of HisH and HisF.

The protein resides in the cytoplasm. The catalysed reaction is 5-[(5-phospho-1-deoxy-D-ribulos-1-ylimino)methylamino]-1-(5-phospho-beta-D-ribosyl)imidazole-4-carboxamide + L-glutamine = D-erythro-1-(imidazol-4-yl)glycerol 3-phosphate + 5-amino-1-(5-phospho-beta-D-ribosyl)imidazole-4-carboxamide + L-glutamate + H(+). Its pathway is amino-acid biosynthesis; L-histidine biosynthesis; L-histidine from 5-phospho-alpha-D-ribose 1-diphosphate: step 5/9. In terms of biological role, IGPS catalyzes the conversion of PRFAR and glutamine to IGP, AICAR and glutamate. The HisF subunit catalyzes the cyclization activity that produces IGP and AICAR from PRFAR using the ammonia provided by the HisH subunit. The protein is Imidazole glycerol phosphate synthase subunit HisF of Pseudarthrobacter chlorophenolicus (strain ATCC 700700 / DSM 12829 / CIP 107037 / JCM 12360 / KCTC 9906 / NCIMB 13794 / A6) (Arthrobacter chlorophenolicus).